We begin with the raw amino-acid sequence, 112 residues long: UPF0060 membrane protein CMS0846 (112 aa).

Transmembrane regions (helical) follow at residues 6 to 26 (VILF…IWQA), 32 to 52 (PFWW…IATL), 61 to 81 (ILAA…TVVD), and 87 to 107 (RWDV…MAAP).

The protein belongs to the UPF0060 family.

The protein localises to the cell membrane. This chain is UPF0060 membrane protein CMS0846, found in Clavibacter sepedonicus (Clavibacter michiganensis subsp. sepedonicus).